The following is a 465-amino-acid chain: MKHKVKNIHFVGIGGSGMSGIAEVLLNLGYTVSGSDLGSNAATRRLIELGAKVTLGHAAENIEKADAIVTSTAVKEDNPEVIAAREKHIPIVPRAVMLAELMRLRRGIAIAGTHGKTTTTSLVASVLAEGGLDPTFVIGGLLNSAGANAKLGTGEFIVAEADESDASFLNLSPVIEVITNIDADHMETYGHDFEKLKQAFIEFTQRLPFYGVAVLCIDDATVREIMPRISKLITTYGFHEDAQVRAIDAKAIDGHMHFTVLQEGYAPMQVSLNQPGMHNVQNACAAIAIARELGVADHATQKALTEFNGVGRRFTRYGEISLPAVNDKPAGTFALVDDYGHHPVETAATIAAARGAYPGRRLVLAFQPHRYTRTRDLFEDFVKVLSTTDMLVLAEVYAAGEQPIVAADGRTLAHALRVAGKVDPVFVEKIADMPATIMNIIKDGDVVITMGAGSISGVPAKLVQA.

112–118 (GTHGKTT) serves as a coordination point for ATP.

Belongs to the MurCDEF family.

It is found in the cytoplasm. The catalysed reaction is UDP-N-acetyl-alpha-D-muramate + L-alanine + ATP = UDP-N-acetyl-alpha-D-muramoyl-L-alanine + ADP + phosphate + H(+). It functions in the pathway cell wall biogenesis; peptidoglycan biosynthesis. In terms of biological role, cell wall formation. The polypeptide is UDP-N-acetylmuramate--L-alanine ligase (Janthinobacterium sp. (strain Marseille) (Minibacterium massiliensis)).